We begin with the raw amino-acid sequence, 80 residues long: UPF0270 protein ASA_3305 (80 aa).

It belongs to the UPF0270 family.

The sequence is that of UPF0270 protein ASA_3305 from Aeromonas salmonicida (strain A449).